A 306-amino-acid polypeptide reads, in one-letter code: Probable arylamine N-acetyltransferase 3 (306 aa).

Cys75 (acyl-thioester intermediate) is an active-site residue. Active-site residues include His115 and Asp130.

Belongs to the arylamine N-acetyltransferase family.

The catalysed reaction is an arylamine + acetyl-CoA = an N-acetylarylamine + CoA. The sequence is that of Probable arylamine N-acetyltransferase 3 from Dictyostelium discoideum (Social amoeba).